The sequence spans 219 residues: MDFLQLLSCACIIFTVGMFTTGLTDLKKMKATQSADNVQFLPFLTTCLNNLGWLYYGLLKGDGTVIFVNIIGAFLQTVYIATYCHYTKEKRRVYTQTLLMVSVLCVAWVYFSLVISPGEAQLSQLGLTCSVFTISMYLSPLADLLDIMRTKSVERLSFSLTVATFFTSTSWTLYGLQLGDYYIMVPNTPGIFTSLIRFFLFWWFGAVIPQIPSYKLIQI.

A run of 7 helical transmembrane segments spans residues 3–23 (FLQL…TTGL), 38–58 (VQFL…YYGL), 63–83 (GTVI…IATY), 98–118 (LLMV…ISPG), 125–145 (LGLT…ADLL), 156–176 (LSFS…LYGL), and 189–209 (PGIF…AVIP). Residues 5 to 90 (QLLSCACIIF…ATYCHYTKEK (86 aa)) enclose the MtN3/slv 1 domain. In terms of domain architecture, MtN3/slv 2 spans 124–204 (QLGLTCSVFT…LIRFFLFWWF (81 aa)).

The protein belongs to the SWEET sugar transporter family.

The protein resides in the golgi apparatus membrane. It is found in the cell membrane. Functionally, mediates sugar transport across membranes. The polypeptide is Sugar transporter SWEET1 (slc50a1) (Danio rerio (Zebrafish)).